The primary structure comprises 56 residues: UPF0434 protein CbuK_1382 (56 aa).

It belongs to the UPF0434 family.

This chain is UPF0434 protein CbuK_1382, found in Coxiella burnetii (strain CbuK_Q154) (Coxiella burnetii (strain Q154)).